Consider the following 254-residue polypeptide: MIIVISPAKSQNFEPIKTAYQFTQPIFKQQIIKLINTLKYYEVEEIEKLMKISPKLAEEVFAKHNSFNPNKYDNSNAKAAIFTFSGDVYKGLEADTLDNKTIEYAQNHLLMLSGLYGLVRPLDLIQAYRLEMGTNIKIDGKILHKYWQDKITTQLNEYFSQQQNKILINLASNEYSQAIDKKSLAVKWLDIDFKENKAGAYKTIGIHAKKARGLMTRYILENRIENVSDIKKFNVAGYQFNPDFSDENLLCFTR.

This sequence belongs to the UPF0246 family.

The protein is UPF0246 protein FTF1693c of Francisella tularensis subsp. tularensis (strain FSC 198).